The chain runs to 123 residues: 1,4-dihydroxy-2-naphthoyl-CoA hydrolase (123 aa).

E46 serves as the catalytic Nucleophile or proton acceptor.

This sequence belongs to the thioesterase PaaI family.

The catalysed reaction is 1,4-dihydroxy-2-naphthoyl-CoA + H2O = 1,4-dihydroxy-2-naphthoate + CoA + H(+). It participates in quinol/quinone metabolism; menaquinone biosynthesis. Catalyzes the hydrolysis of 1,4-dihydroxy-2-naphthoyl-CoA (DHNA-CoA) to 1,4-dihydroxy-2-naphthoate (DHNA) and free coenzyme A. Production of DHNA is required for protection against bacteriolysis in the cytosol of macrophages and tissue-specific virulence in vivo, suggesting that MenI is required to protect the bacteria from killing in the macrophage cytosol. The sequence is that of 1,4-dihydroxy-2-naphthoyl-CoA hydrolase from Listeria monocytogenes serotype 1/2a (strain 10403S).